We begin with the raw amino-acid sequence, 271 residues long: MKI67 FHA domain-interacting nucleolar phosphoprotein (271 aa).

The interval M1 to S20 is disordered. An N-acetylalanine modification is found at A2. A Glycyl lysine isopeptide (Lys-Gly) (interchain with G-Cter in SUMO2) cross-link involves residue K37. Residues G44 to R122 form the RRM domain. R113 bears the Omega-N-methylarginine mark. Glycyl lysine isopeptide (Lys-Gly) (interchain with G-Cter in SUMO2) cross-links involve residues K178 and K191. Phosphothreonine is present on residues T213 and T217. R223 and R224 each carry omega-N-methylated arginine. Phosphoserine is present on S226. Residues P242–Q271 form a disordered region. K247 is covalently cross-linked (Glycyl lysine isopeptide (Lys-Gly) (interchain with G-Cter in SUMO1); alternate). A Glycyl lysine isopeptide (Lys-Gly) (interchain with G-Cter in SUMO2); alternate cross-link involves residue K247. Over residues K261–Q271 the composition is skewed to basic residues.

As to quaternary structure, binds to the FHA domain of MKI67; this interaction is enhanced in mitosis. Phosphorylated.

It is found in the nucleus. It localises to the nucleolus. The protein resides in the chromosome. This chain is MKI67 FHA domain-interacting nucleolar phosphoprotein (Nifk), found in Rattus norvegicus (Rat).